A 600-amino-acid chain; its full sequence is MRVSALLLVTLRDDPAEAEIPSHKLLLRGGYIRRVASGIYAYLPLMWRVLRKVSAIVRQEMDAAGALETLLPQLQPAELWQRSGRWSGYTAGEGIMFHLQDRQDRELGLGPTHEEVITALAADLLRSYRQLPVNLYQIQTKFRDEIRPRFGLMRGREFIMKDAYSFHASAEDLGRGYAAMDQAYRRIFSRCGLQVVAVQADSGAIGGSASQEFMVTAEAGEDLILSSADGSYAANQERAESLPAEPVPLQSATAAELDTPGQTSIDALVEAQGWHASQLVKVILLVARFEQGRQQPLLVSLRGDQQLNEVTLANWLNQQHGQAWGALLGIEPLEAKHLAAEKVPAFGYLGPDLSDAVLQGSKKLESSFLRLADPTALDLPLFICGANRFNAHRLAANWSEPGMASPQRVELRAALPGDRCCHDPSQQLQARRGIEVGHIFQLGLKYSEALGATFANEQGQDAPLWMGCYGIGVSRLAQAAVEQHHDSAGMVWPVPIAPFEVVIVIASSKEAQQVELAEDLYGQLQQAGVDVLLDDRNERAGVKFKDAELIGIPWRLVVGRGAVNGQVELVERCSGEKQEGPHQDLMAQLLQTLDQQRQGL.

Belongs to the class-II aminoacyl-tRNA synthetase family. ProS type 1 subfamily. As to quaternary structure, homodimer.

It is found in the cytoplasm. It catalyses the reaction tRNA(Pro) + L-proline + ATP = L-prolyl-tRNA(Pro) + AMP + diphosphate. Its function is as follows. Catalyzes the attachment of proline to tRNA(Pro) in a two-step reaction: proline is first activated by ATP to form Pro-AMP and then transferred to the acceptor end of tRNA(Pro). As ProRS can inadvertently accommodate and process non-cognate amino acids such as alanine and cysteine, to avoid such errors it has two additional distinct editing activities against alanine. One activity is designated as 'pretransfer' editing and involves the tRNA(Pro)-independent hydrolysis of activated Ala-AMP. The other activity is designated 'posttransfer' editing and involves deacylation of mischarged Ala-tRNA(Pro). The misacylated Cys-tRNA(Pro) is not edited by ProRS. This Synechococcus sp. (strain RCC307) protein is Proline--tRNA ligase.